A 380-amino-acid polypeptide reads, in one-letter code: Opsin-2 (380 aa).

The Extracellular segment spans residues 1–51; sequence MVNTTDFYPVPAAMAYESSVGLPLLGWNVPTEHLDLVHPHWRSFQVPNKYW. A glycan (N-linked (GlcNAc...) asparagine) is linked at Asn-3. A helical transmembrane segment spans residues 52 to 76; that stretch reads HFGLAFVYFMLMCMSSLGNGIVLWI. The Cytoplasmic portion of the chain corresponds to 77–88; sequence YATTKSIRTPSN. Residues 89–115 traverse the membrane as a helical segment; the sequence is MFIVNLALFDVLMLLEMPMLVVSSLFY. At 116 to 128 the chain is on the extracellular side; sequence QRPVGWELGCDIY. The cysteines at positions 125 and 202 are disulfide-linked. A helical membrane pass occupies residues 129-148; that stretch reads AALGSVAGIGSAINNAAIAF. Topologically, residues 149–166 are cytoplasmic; that stretch reads DRYRTISCPIDGRLTQGQ. The helical transmembrane segment at 167-191 threads the bilayer; the sequence is VLALIAGTWVWTLPFTLMPLLRIWS. Topologically, residues 192–215 are extracellular; that stretch reads RFTAEGFLTTCSFDYLTDDEDTKV. The helical transmembrane segment at 216-243 threads the bilayer; it reads FVGCIFAWSYAFPLCLICCFYYRLIGAV. Topologically, residues 244 to 279 are cytoplasmic; it reads REHEKMLRDQAKKMNVKSLQSNADTEAQSAEIRIAK. Residues 280-303 traverse the membrane as a helical segment; that stretch reads VALTIFFLFLCSWTPYAVVAMIGA. The Extracellular segment spans residues 304–311; the sequence is FGNRAALT. A helical transmembrane segment spans residues 312–336; the sequence is PLSTMIPAVTAKIVSCIDPWVYAIN. At Lys-323 the chain carries N6-(retinylidene)lysine. At 337–380 the chain is on the cytoplasmic side; it reads HPRFRAEVQKRMKWLHLGEDARSSKSDTSSTATDRTVGNVSASA. Residues 358-380 form a disordered region; the sequence is RSSKSDTSSTATDRTVGNVSASA. Over residues 362-372 the composition is skewed to low complexity; it reads SDTSSTATDRT.

It belongs to the G-protein coupled receptor 1 family. Opsin subfamily. In terms of processing, phosphorylated on some or all of the serine and threonine residues present in the C-terminal region.

Its subcellular location is the membrane. Its function is as follows. Visual pigments are the light-absorbing molecules that mediate vision. They consist of an apoprotein, opsin, covalently linked to cis-retinal. The polypeptide is Opsin-2 (Lo2) (Schistocerca gregaria (Desert locust)).